We begin with the raw amino-acid sequence, 860 residues long: Leucine--tRNA ligase (860 aa).

A 'HIGH' region motif is present at residues proline 42–histidine 52. Positions lysine 619–serine 623 match the 'KMSKS' region motif. Position 622 (lysine 622) interacts with ATP.

This sequence belongs to the class-I aminoacyl-tRNA synthetase family.

The protein localises to the cytoplasm. The catalysed reaction is tRNA(Leu) + L-leucine + ATP = L-leucyl-tRNA(Leu) + AMP + diphosphate. This Actinobacillus succinogenes (strain ATCC 55618 / DSM 22257 / CCUG 43843 / 130Z) protein is Leucine--tRNA ligase.